Reading from the N-terminus, the 93-residue chain is Consomatin G1 (93 aa).

The N-terminal stretch at 1-22 is a signal peptide; that stretch reads MQTAYWVMLMMMVCITAPLPEG. Positions 23-69 are excised as a propeptide; the sequence is GKPNSGIRGLVPNDLTPQHTLRSLISRRQTDVLLDATLLTTPAPEQR. Cysteines 72 and 77 form a disulfide. Trp74 carries the post-translational modification D-tryptophan. Positions 79–93 are excised as a propeptide; sequence PRPYPWRRRDLNGKR.

Belongs to the conotoxin C superfamily. Consomatin family. In terms of tissue distribution, expressed by the venom duct.

It localises to the secreted. In terms of biological role, potently activates human somatostatin receptors (SSTR) with a specific activation of SSTR2 (EC(50)=2.6 nM). The sequence is that of Consomatin G1 from Conus geographus (Geography cone).